Consider the following 93-residue polypeptide: Small ribosomal subunit protein uS17 (93 aa).

It belongs to the universal ribosomal protein uS17 family. As to quaternary structure, part of the 30S ribosomal subunit.

Its function is as follows. One of the primary rRNA binding proteins, it binds specifically to the 5'-end of 16S ribosomal RNA. The polypeptide is Small ribosomal subunit protein uS17 (Corynebacterium aurimucosum (strain ATCC 700975 / DSM 44827 / CIP 107346 / CN-1) (Corynebacterium nigricans)).